The primary structure comprises 317 residues: Retinol dehydrogenase 16 (317 aa).

33–57 is a binding site for NAD(+); that stretch reads FITGCDSGFGNLLARQLDRRGMRVL. Ser164 is a binding site for substrate. Tyr176 functions as the Proton acceptor in the catalytic mechanism. Residues 289–308 form a helical membrane-spanning segment; that stretch reads FFYLPMSYLPTFLVDALFYW.

It belongs to the short-chain dehydrogenases/reductases (SDR) family. As to quaternary structure, homodimer. Post-translationally, not N-glycosylated. In terms of tissue distribution, liver &gt; kidney &gt; brain &gt; lung &gt; testis.

The protein resides in the microsome membrane. It localises to the endoplasmic reticulum membrane. It catalyses the reaction all-trans-retinol--[retinol-binding protein] + NAD(+) = all-trans-retinal--[retinol-binding protein] + NADH + H(+). The catalysed reaction is all-trans-retinol + NAD(+) = all-trans-retinal + NADH + H(+). The enzyme catalyses 13-cis-retinol + NAD(+) = 13-cis-retinal + NADH + H(+). It carries out the reaction 11-cis-retinol + NAD(+) = 11-cis-retinal + NADH + H(+). It catalyses the reaction 9-cis-retinol + NAD(+) = 9-cis-retinal + NADH + H(+). The catalysed reaction is 5alpha-androstane-3alpha,17beta-diol + NAD(+) = 17beta-hydroxy-5alpha-androstan-3-one + NADH + H(+). The enzyme catalyses androsterone + NAD(+) = 5alpha-androstan-3,17-dione + NADH + H(+). It participates in cofactor metabolism; retinol metabolism. Its function is as follows. Oxidoreductase with a preference for NAD. Oxidizes all-trans-retinol, 9-cis-retinol, 11-cis-retinol and 13-cis-retinol to the corresponding aldehydes. Has higher activity towards CRBP-bound retinol than with free retinol. Oxidizes 3-alpha-hydroxysteroids. Oxidizes androstanediol and androsterone to dihydrotestosterone and androstanedione. Can also catalyze the reverse reaction. The sequence is that of Retinol dehydrogenase 16 from Rattus norvegicus (Rat).